The chain runs to 256 residues: 5'-nucleotidase SurE (256 aa).

A divalent metal cation contacts are provided by Asp13, Asp14, Ser44, and Asn101.

It belongs to the SurE nucleotidase family. The cofactor is a divalent metal cation.

Its subcellular location is the cytoplasm. It catalyses the reaction a ribonucleoside 5'-phosphate + H2O = a ribonucleoside + phosphate. Nucleotidase that shows phosphatase activity on nucleoside 5'-monophosphates. The polypeptide is 5'-nucleotidase SurE (Porphyromonas gingivalis (strain ATCC 33277 / DSM 20709 / CIP 103683 / JCM 12257 / NCTC 11834 / 2561)).